Consider the following 419-residue polypeptide: UDP-arabinose 4-epimerase 1 (419 aa).

The tract at residues 1–21 (MFSFGRARSQGRQNRSMSLGG) is disordered. Residues 1 to 32 (MFSFGRARSQGRQNRSMSLGGLDYADPKKKNN) are Cytoplasmic-facing. Residues 33-51 (YLGKILLTASLTALCIFML) form a helical; Signal-anchor for type II membrane protein membrane-spanning segment. The Lumenal portion of the chain corresponds to 52–419 (KQSPTFNTPS…GLTTSSVSVY (368 aa)). Position 72–103 (72–103 (HVLVTGGAGYIGSHAALRLLKESYRVTIVDNL)) interacts with NAD(+). The Proton acceptor role is filled by tyrosine 220.

The protein belongs to the NAD(P)-dependent epimerase/dehydratase family. It depends on NAD(+) as a cofactor. High expression in roots. Also found in leaves, stems, flowers, and siliques.

The protein localises to the golgi apparatus. The protein resides in the golgi stack membrane. It carries out the reaction UDP-beta-L-arabinopyranose = UDP-alpha-D-xylose. It participates in nucleotide-sugar biosynthesis; UDP-L-arabinose biosynthesis; UDP-L-arabinose from UDP-alpha-D-xylose: step 1/1. The protein operates within cell wall biogenesis; cell wall polysaccharide biosynthesis. Functionally, acts as a UDP-D-xylose 4-epimerase but lacks both UDP-D-glucose and UDP-D-glucuronic acid 4-epimerase activities in vitro. The protein is UDP-arabinose 4-epimerase 1 of Arabidopsis thaliana (Mouse-ear cress).